The primary structure comprises 403 residues: Chorismate synthase (403 aa).

NADP(+) contacts are provided by arginine 40 and arginine 46. FMN-binding positions include 140–142 and 261–262; these read RSS and QA. The segment covering 277-298 has biased composition (basic and acidic residues); that stretch reads RRGSEAHDEMVRTDEGVDRETN. The segment at 277–307 is disordered; sequence RRGSEAHDEMVRTDEGVDRETNRAGGLEGGM. FMN contacts are provided by residues glycine 305, 320 to 324, and arginine 346; that span reads KPIST.

Belongs to the chorismate synthase family. In terms of assembly, homotetramer. Requires FMNH2 as cofactor.

It catalyses the reaction 5-O-(1-carboxyvinyl)-3-phosphoshikimate = chorismate + phosphate. The protein operates within metabolic intermediate biosynthesis; chorismate biosynthesis; chorismate from D-erythrose 4-phosphate and phosphoenolpyruvate: step 7/7. Its function is as follows. Catalyzes the anti-1,4-elimination of the C-3 phosphate and the C-6 proR hydrogen from 5-enolpyruvylshikimate-3-phosphate (EPSP) to yield chorismate, which is the branch point compound that serves as the starting substrate for the three terminal pathways of aromatic amino acid biosynthesis. This reaction introduces a second double bond into the aromatic ring system. The protein is Chorismate synthase of Corynebacterium aurimucosum (strain ATCC 700975 / DSM 44827 / CIP 107346 / CN-1) (Corynebacterium nigricans).